A 436-amino-acid polypeptide reads, in one-letter code: Putative F-box/FBD/LRR-repeat protein At5g44960 (436 aa).

The F-box domain occupies 4 to 50; sequence CDYINELPDSLLTQILLDLRTKDSVKTSVSSKRWRNLWLNVPGLDLF. LRR repeat units lie at residues 287-310 and 397-420; these read ISSVRHMIISGSILEELHSYSKLG and SAVLKKLTLRFSFFSSIESESYKK. Residues 355–407 form the FBD domain; it reads EENIDFHEVPQCLISTLEYVHINKLMMMEQSGIKLVNYFIENSAVLKKLTLRF.

The sequence is that of Putative F-box/FBD/LRR-repeat protein At5g44960 from Arabidopsis thaliana (Mouse-ear cress).